The chain runs to 136 residues: uncharacterized protein (136 aa).

Residues 19-39 (LGFPLGTALLLIIIFSLSGIF) traverse the membrane as a helical segment. Disordered regions lie at residues 54 to 87 (SLAN…LSVP) and 112 to 136 (KLTV…VPLY).

Its subcellular location is the membrane. This is an uncharacterized protein from Arabidopsis thaliana (Mouse-ear cress).